Here is a 214-residue protein sequence, read N- to C-terminus: Ras-like protein 2 (214 aa).

GTP is bound by residues 19 to 24, 35 to 41, 65 to 66, 122 to 125, and 152 to 154; these read GVGKSC, VDEYDPT, AG, NKCD, and SAK. Residues 38-46 carry the Effector region motif; it reads YDPTIEDSY. The tract at residues 178–197 is disordered; the sequence is QGYSTGSGGSNAGGPSNKME. Position 211 is a cysteine methyl ester (cysteine 211). Residue cysteine 211 is the site of S-farnesyl cysteine attachment. The propeptide at 212 to 214 is removed in mature form; sequence VLM.

It belongs to the small GTPase superfamily. Ras family. Interacts with farnesyltransferase beta subunit RAM1.

The protein resides in the cell membrane. Its activity is regulated as follows. Alternates between an inactive form bound to GDP and an active form bound to GTP. Activated by a guanine nucleotide-exchange factor (GEF) and inactivated by a GTPase-activating protein (GAP). Modulates the activity of the adenylate cyclase catalytic subunit and therefore affects the biosynthesis of cyclic-AMP. Plays a role in both surface attachment and surface recognition of appressoria, a highly specialized infection structure for plant penetration. Regulates appressorium formation by coordinated regulation of cAMP signaling and Pmk1 MAPK pathways. The polypeptide is Ras-like protein 2 (Pyricularia oryzae (strain 70-15 / ATCC MYA-4617 / FGSC 8958) (Rice blast fungus)).